The following is a 509-amino-acid chain: Histidine--tRNA ligase, cytoplasmic (509 aa).

Ala-2 is subject to N-acetylalanine. One can recognise a WHEP-TRS domain in the interval 3–59 (ERAALEELVKLQGERVRGLKQQKASAELIEEEVAKLLKLKAQLGPDESKQKFVLKTP). Phosphoserine is present on Ser-66. Residues 130 to 132 (DLT), Arg-157, Gln-173, Asp-177, Arg-326, and 330 to 331 (YY) contribute to the L-histidine site. The residue at position 356 (Ser-356) is a Phosphoserine.

The protein belongs to the class-II aminoacyl-tRNA synthetase family. Homodimer.

Its subcellular location is the cytoplasm. The enzyme catalyses tRNA(His) + L-histidine + ATP = L-histidyl-tRNA(His) + AMP + diphosphate + H(+). Its function is as follows. Catalyzes the ATP-dependent ligation of histidine to the 3'-end of its cognate tRNA, via the formation of an aminoacyl-adenylate intermediate (His-AMP). Plays a role in axon guidance. In Pongo abelii (Sumatran orangutan), this protein is Histidine--tRNA ligase, cytoplasmic (HARS1).